A 921-amino-acid chain; its full sequence is Translation initiation factor IF-2 (921 aa).

Residues 1–296 are disordered; sequence MADNNTPGDK…PGPQKQRGRL (296 aa). The span at 80-89 shows a compositional bias: low complexity; sequence RPSGPRPGSS. Residues 116-182 show a composition bias toward basic and acidic residues; that stretch reads ARVRDMEERR…AKKRFGEGEA (67 aa). Residues 183–257 are compositionally biased toward low complexity; sequence PRPATAAPQQ…LGRAPGVAAG (75 aa). A tr-type G domain is found at 417 to 586; that stretch reads PRSPVVTVMG…MIALQADILD (170 aa). The G1 stretch occupies residues 426–433; it reads GHVDHGKT. 426-433 serves as a coordination point for GTP; sequence GHVDHGKT. Residues 451-455 are G2; the sequence is GITQH. The segment at 474 to 477 is G3; it reads DTPG. Residues 474 to 478 and 528 to 531 contribute to the GTP site; these read DTPGH and NKID. Residues 528–531 are G4; that stretch reads NKID. The tract at residues 564 to 566 is G5; it reads SAK.

It belongs to the TRAFAC class translation factor GTPase superfamily. Classic translation factor GTPase family. IF-2 subfamily.

It localises to the cytoplasm. In terms of biological role, one of the essential components for the initiation of protein synthesis. Protects formylmethionyl-tRNA from spontaneous hydrolysis and promotes its binding to the 30S ribosomal subunits. Also involved in the hydrolysis of GTP during the formation of the 70S ribosomal complex. In Bradyrhizobium sp. (strain BTAi1 / ATCC BAA-1182), this protein is Translation initiation factor IF-2.